The chain runs to 200 residues: Probable nicotinate-nucleotide adenylyltransferase (200 aa).

The protein belongs to the NadD family.

The enzyme catalyses nicotinate beta-D-ribonucleotide + ATP + H(+) = deamido-NAD(+) + diphosphate. The protein operates within cofactor biosynthesis; NAD(+) biosynthesis; deamido-NAD(+) from nicotinate D-ribonucleotide: step 1/1. Catalyzes the reversible adenylation of nicotinate mononucleotide (NaMN) to nicotinic acid adenine dinucleotide (NaAD). The sequence is that of Probable nicotinate-nucleotide adenylyltransferase from Clostridium tetani (strain Massachusetts / E88).